A 286-amino-acid polypeptide reads, in one-letter code: Light-independent protochlorophyllide reductase iron-sulfur ATP-binding protein (286 aa).

ATP-binding positions include 10–15 (GIGKST) and Lys-39. Position 14 (Ser-14) interacts with Mg(2+). Positions 95 and 129 each coordinate [4Fe-4S] cluster. 180-181 (NR) is an ATP binding site.

Belongs to the NifH/BchL/ChlL family. As to quaternary structure, homodimer. Protochlorophyllide reductase is composed of three subunits; ChlL, ChlN and ChlB. Requires [4Fe-4S] cluster as cofactor.

The catalysed reaction is chlorophyllide a + oxidized 2[4Fe-4S]-[ferredoxin] + 2 ADP + 2 phosphate = protochlorophyllide a + reduced 2[4Fe-4S]-[ferredoxin] + 2 ATP + 2 H2O. It functions in the pathway porphyrin-containing compound metabolism; chlorophyll biosynthesis (light-independent). Its function is as follows. Component of the dark-operative protochlorophyllide reductase (DPOR) that uses Mg-ATP and reduced ferredoxin to reduce ring D of protochlorophyllide (Pchlide) to form chlorophyllide a (Chlide). This reaction is light-independent. The L component serves as a unique electron donor to the NB-component of the complex, and binds Mg-ATP. The polypeptide is Light-independent protochlorophyllide reductase iron-sulfur ATP-binding protein (Synechococcus elongatus (strain ATCC 33912 / PCC 7942 / FACHB-805) (Anacystis nidulans R2)).